Reading from the N-terminus, the 109-residue chain is Period circadian protein (109 aa).

The segment at 59-109 (CFEGSGGSGSSGNFTSGSNLNMRSVTNTSNTGTGTSSESVPLVTLTEALIS) is disordered. Residues 69–98 (SGNFTSGSNLNMRSVTNTSNTGTGTSSESV) are compositionally biased toward low complexity.

In terms of assembly, forms a heterodimer with timeless (TIM); the complex then translocates into the nucleus. In terms of processing, phosphorylated with a circadian rhythmicity, probably by the double-time protein (dbt). Phosphorylation could be implicated in the stability of per monomer and in the formation of heterodimer per-tim.

It is found in the nucleus. Its subcellular location is the cytoplasm. The protein resides in the perinuclear region. Functionally, essential for biological clock functions. Determines the period length of circadian and ultradian rhythms; an increase in PER dosage leads to shortened circadian rhythms and a decrease leads to lengthened circadian rhythms. Essential for the circadian rhythmicity of locomotor activity, eclosion behavior, and for the rhythmic component of the male courtship song that originates in the thoracic nervous system. The biological cycle depends on the rhythmic formation and nuclear localization of the TIM-PER complex. Light induces the degradation of TIM, which promotes elimination of PER. Nuclear activity of the heterodimer coordinatively regulates PER and TIM transcription through a negative feedback loop. Behaves as a negative element in circadian transcriptional loop. Does not appear to bind DNA, suggesting indirect transcriptional inhibition. The chain is Period circadian protein (per) from Syritta pipiens (Hoverfly).